We begin with the raw amino-acid sequence, 424 residues long: Serine/threonine-protein kinase H1 (424 aa).

G2 is lipidated: N-myristoyl glycine. A lipid anchor (S-palmitoyl cysteine) is attached at C3. The disordered stretch occupies residues 56–80; the sequence is SQYAHPCPGPPTAGHTEPPSEPPRR. A Protein kinase domain is found at 98 to 355; the sequence is YDIKALIGRG…ALQALRHPWV (258 aa). Residues 104–112 and K127 contribute to the ATP site; that span reads IGRGSFSRV. D218 acts as the Proton acceptor in catalysis. Residues 378–407 form a disordered region; sequence RASSRCQSTKSAQSTRSSRSTRSNKSRRVR. Residues S380 and S381 each carry the phosphoserine; by autocatalysis modification. Residues 385-398 are compositionally biased toward low complexity; the sequence is STKSAQSTRSSRST.

This sequence belongs to the protein kinase superfamily. CAMK Ser/Thr protein kinase family. In terms of assembly, homodimer. In terms of processing, autophosphorylated on serine residues. Post-translationally, myristoylated. Required for membrane association. Prerequisite for palmitoylation to occur. Palmitoylated. Expressed in all tissues and cell lines tested with the highest level of abundance in testis.

The protein localises to the golgi apparatus. It localises to the cytoplasm. The protein resides in the cytoskeleton. It is found in the microtubule organizing center. Its subcellular location is the centrosome. The protein localises to the nucleus speckle. It localises to the endoplasmic reticulum membrane. The protein resides in the cell membrane. It carries out the reaction L-seryl-[protein] + ATP = O-phospho-L-seryl-[protein] + ADP + H(+). It catalyses the reaction L-threonyl-[protein] + ATP = O-phospho-L-threonyl-[protein] + ADP + H(+). With respect to regulation, activity depends on Ca(2+) concentration. Functionally, serine/threonine protein kinase that may be involved in the regulation of pre-mRNA processing. It may phosphorylate components of nuclear splice factor compartments (SFC), such as non-snRNP splicing factors containing a serine/arginine-rich domain (SR proteins). Reversible phosphorylation of SR proteins may cause their release into the nucleoplasm and change their local concentration, thereby influencing alternative splicing. This is Serine/threonine-protein kinase H1 (PSKH1) from Homo sapiens (Human).